The primary structure comprises 808 residues: Transcription activator of gluconeogenesis PAAG_01030 (808 aa).

Positions 1-90 (MTSSVRNGSP…SAKDPLRPRR (90 aa)) are disordered. A compositionally biased stretch (low complexity) spans 69 to 83 (STSSTAASANNASAK). The zn(2)-C6 fungal-type DNA-binding region spans 97 to 125 (CFACQRAHLTCGDERPCQRCIKRGLQDTC). Residues 158-170 (AARNKVNSNSQQR) are compositionally biased toward polar residues. Disordered regions lie at residues 158 to 203 (AARN…FSTP), 236 to 285 (SAFQ…YGST), 322 to 387 (GAGD…IYNQ), 442 to 461 (PPTN…STPS), and 598 to 629 (TGGS…DNQS). The segment covering 171–188 (NGTNSNSDNNSTNTNSNN) has biased composition (low complexity). Composition is skewed to polar residues over residues 189–203 (KPSH…FSTP), 248–279 (FDLS…SQNP), 339–359 (GRSS…NQSP), and 377–387 (GPTNPRNIYNQ). Low complexity-rich tracts occupy residues 442-451 (PPTNTQHQQQ) and 598-619 (TGGS…SRNS). A compositionally biased stretch (polar residues) spans 620–629 (ATTTVMDNQS).

This sequence belongs to the ERT1/acuK family.

It is found in the nucleus. Its function is as follows. Transcription factor which regulates nonfermentable carbon utilization. Activator of gluconeogenetic genes. The sequence is that of Transcription activator of gluconeogenesis PAAG_01030 from Paracoccidioides lutzii (strain ATCC MYA-826 / Pb01) (Paracoccidioides brasiliensis).